We begin with the raw amino-acid sequence, 1305 residues long: Contactin-associated protein like 5-4 (1305 aa).

An N-terminal signal peptide occupies residues 1–24; sequence MNSVRRLNSILTLVLSGLWHLGLT. Over 25-1237 the chain is Extracellular; it reads ATNYNCDEPL…LTDTVQSDSA (1213 aa). The F5/8 type C domain occupies 30–174; the sequence is CDEPLASFLS…IGMRVEVYGC (145 aa). Cys30 and Cys174 form a disulfide bridge. Laminin G-like domains lie at 180-360 and 367-544; these read IVGF…TFSC and PITF…IDLC. Residue Asn282 is glycosylated (N-linked (GlcNAc...) asparagine). Cys329 and Cys360 are disulfide-bonded. Residue Asn496 is glycosylated (N-linked (GlcNAc...) asparagine). Disulfide bonds link Cys512/Cys544, Cys550/Cys561, and Cys555/Cys570. Positions 546 to 583 constitute an EGF-like 1 domain; it reads IKDRCLPNYCEHGGHCAQNWTTFYCNCSDTGYTGATCH. Asn571 carries N-linked (GlcNAc...) asparagine glycosylation. A disulfide bridge links Cys572 with Cys582. Residues 584-790 enclose the Fibrinogen C-terminal domain; that stretch reads DSVYEQSCEV…LRCYGDRHFW (207 aa). A glycan (N-linked (GlcNAc...) asparagine) is linked at Asn622. A Laminin G-like 3 domain is found at 791 to 956; the sequence is NAVSFTTEAS…KLMSGVTPGC (166 aa). Disulfide bonds link Cys929-Cys956, Cys960-Cys973, Cys967-Cys982, and Cys984-Cys994. An EGF-like 2 domain is found at 957–995; sequence LGHCSSYGSNCLNGGKCVEKQSGYSCDCTNSPNEGPFCQ. The region spanning 1014-1198 is the Laminin G-like 4 domain; that stretch reads EPYLVIKNTS…VQGTLTESGC (185 aa). An N-linked (GlcNAc...) asparagine glycan is attached at Asn1057. An intrachain disulfide couples Cys1163 to Cys1198. The chain crosses the membrane as a helical span at residues 1238–1258; the sequence is VIGGIIALVTFVTFCVIGIMI. At 1259–1305 the chain is on the cytoplasmic side; the sequence is HFLYLHKQSHCTNQTKEKEYSENLSNSFRNAIDLQNTASECKREYFI.

Belongs to the neurexin family.

The protein localises to the membrane. Its function is as follows. May play a role in the correct development and proper functioning of the peripheral and central nervous system and be involved in cell adhesion and intercellular communication. This chain is Contactin-associated protein like 5-4 (Cntnap5d), found in Rattus norvegicus (Rat).